A 321-amino-acid chain; its full sequence is tRNA(Ile)-lysidine synthase (321 aa).

30–35 (SGGSDS) is a binding site for ATP.

The protein belongs to the tRNA(Ile)-lysidine synthase family.

It localises to the cytoplasm. It carries out the reaction cytidine(34) in tRNA(Ile2) + L-lysine + ATP = lysidine(34) in tRNA(Ile2) + AMP + diphosphate + H(+). Its function is as follows. Ligates lysine onto the cytidine present at position 34 of the AUA codon-specific tRNA(Ile) that contains the anticodon CAU, in an ATP-dependent manner. Cytidine is converted to lysidine, thus changing the amino acid specificity of the tRNA from methionine to isoleucine. The polypeptide is tRNA(Ile)-lysidine synthase (Chlamydia trachomatis serovar L2 (strain ATCC VR-902B / DSM 19102 / 434/Bu)).